A 426-amino-acid polypeptide reads, in one-letter code: Protein TolB homolog (426 aa).

Residues 1-19 (MFLRSFLCLLCLLPSILYC) form the signal peptide.

The protein belongs to the TolB family.

The protein localises to the periplasm. In Chlamydia muridarum (strain MoPn / Nigg), this protein is Protein TolB homolog.